The primary structure comprises 339 residues: MSGELWITLVDTADIVGVTLTFCVNIVLLGLLKTRGKNLGTYKYLMAFFSVFSIFYAIIEFILRPIMHIENTTFFLISRKRFNYSTKLGKINSAFYCACFATSFVVSGVHFVYRYFATCKPNLLRLFNLPTLLLWPLGCSVPVTMWASVSYFLYPDTEYTEAAVTNVLNNHYNWIKKENVSYIAYVYYQYENGVRHIYLKNLLGCFVHYFVMSMTFVVMFYCGYATWKTMNEHKDVSDRTRALQKQLFKALVLQTLIPTIFMYAPTGVMFIAPFFDVNLNANANFIVFCSFLYPGLDPLILILIIRDFRRTIFNFLCGKKNSVDESRSTTRANLSQVPT.

The Extracellular portion of the chain corresponds to 1-11 (MSGELWITLVD). A helical transmembrane segment spans residues 12–32 (TADIVGVTLTFCVNIVLLGLL). Residues 33–42 (KTRGKNLGTY) are Cytoplasmic-facing. Residues 43 to 63 (KYLMAFFSVFSIFYAIIEFIL) form a helical membrane-spanning segment. Residues 64–92 (RPIMHIENTTFFLISRKRFNYSTKLGKIN) lie on the Extracellular side of the membrane. 2 N-linked (GlcNAc...) asparagine glycosylation sites follow: Asn-71 and Asn-83. The helical transmembrane segment at 93–113 (SAFYCACFATSFVVSGVHFVY) threads the bilayer. The Cytoplasmic segment spans residues 114 to 131 (RYFATCKPNLLRLFNLPT). A helical membrane pass occupies residues 132–152 (LLLWPLGCSVPVTMWASVSYF). Over 153-201 (LYPDTEYTEAAVTNVLNNHYNWIKKENVSYIAYVYYQYENGVRHIYLKN) the chain is Extracellular. Asn-179 carries an N-linked (GlcNAc...) asparagine glycan. A helical membrane pass occupies residues 202–222 (LLGCFVHYFVMSMTFVVMFYC). Residues 223–254 (GYATWKTMNEHKDVSDRTRALQKQLFKALVLQ) lie on the Cytoplasmic side of the membrane. Residues 255-275 (TLIPTIFMYAPTGVMFIAPFF) form a helical membrane-spanning segment. Residues 276–284 (DVNLNANAN) are Extracellular-facing. A helical transmembrane segment spans residues 285–305 (FIVFCSFLYPGLDPLILILII). At 306 to 339 (RDFRRTIFNFLCGKKNSVDESRSTTRANLSQVPT) the chain is on the cytoplasmic side.

This sequence belongs to the nematode receptor-like protein str family. Interacts with odr-4. Strongly expressed in the sensory cilia of AWA olfactory neurons, and at low levels in the CEP neurons.

It is found in the cell projection. It localises to the cilium membrane. In terms of biological role, an odorant receptor which affects chemotaxis to the volatile odorant diacetyl. Specifies AWA neuronal cell fate via the odr-7 pathway. In Caenorhabditis elegans, this protein is Serpentine receptor class r-10.